The sequence spans 274 residues: Large ribosomal subunit protein uL2cz/uL2cy (274 aa).

Disordered regions lie at residues 1 to 23 (MAIH…SQVK) and 224 to 274 (NPVD…RRSK).

Belongs to the universal ribosomal protein uL2 family. Part of the 50S ribosomal subunit.

The protein localises to the plastid. The protein resides in the chloroplast. This is Large ribosomal subunit protein uL2cz/uL2cy (rpl2-A) from Vitis vinifera (Grape).